A 222-amino-acid polypeptide reads, in one-letter code: Latexin (222 aa).

The Cystatin LXN-type 1 domain occupies 1-97; sequence MEIPPTNYPA…NFTFEGETGK (97 aa). Lys-55 bears the N6-acetyllysine mark. The segment at 98–117 is alpha-helical linker; it reads NPDEEDNTFYQRLKSMKEPL. The Cystatin LXN-type 2 domain occupies 118–222; it reads EAQNIPDNFG…SRLPKEVQLE (105 aa).

This sequence belongs to the protease inhibitor I47 (latexin) family. In terms of tissue distribution, highly expressed in heart, prostate, ovary, kidney, pancreas, and colon, moderate or low in other tissues including brain.

It localises to the cytoplasm. Its function is as follows. Hardly reversible, non-competitive, and potent inhibitor of CPA1, CPA2 and CPA4. May play a role in inflammation. The sequence is that of Latexin (LXN) from Homo sapiens (Human).